Here is a 784-residue protein sequence, read N- to C-terminus: Homoaconitase, mitochondrial (784 aa).

Residues 1-32 (MIHPVRRALAVAASRAPRQFLAAASRTTSVRS) constitute a mitochondrion transit peptide. 3 residues coordinate [4Fe-4S] cluster: Cys-399, Cys-468, and Cys-471. Residues 572-596 (EAGLTPESTSSSSSSSSSSEEESLT) form a disordered region. A compositionally biased stretch (low complexity) spans 578-589 (ESTSSSSSSSSS).

This sequence belongs to the aconitase/IPM isomerase family. Requires [4Fe-4S] cluster as cofactor.

It is found in the mitochondrion. It carries out the reaction (2R,3S)-homoisocitrate = cis-homoaconitate + H2O. It functions in the pathway amino-acid biosynthesis; L-lysine biosynthesis via AAA pathway; L-alpha-aminoadipate from 2-oxoglutarate: step 3/5. In terms of biological role, catalyzes the reversible hydration of cis-homoaconitate to (2R,3S)-homoisocitrate, a step in the alpha-aminoadipate pathway for lysine biosynthesis. The protein is Homoaconitase, mitochondrial (lys-4) of Neurospora crassa (strain ATCC 24698 / 74-OR23-1A / CBS 708.71 / DSM 1257 / FGSC 987).